The following is a 101-amino-acid chain: Small ribosomal subunit protein uS14 (101 aa).

Residues 1–11 (MAKKSAIETNE) show a composition bias toward basic and acidic residues. The disordered stretch occupies residues 1 to 24 (MAKKSAIETNERRRKLSQSKAAKR). A compositionally biased stretch (basic residues) spans 12 to 24 (RRRKLSQSKAAKR).

It belongs to the universal ribosomal protein uS14 family. Part of the 30S ribosomal subunit. Contacts proteins S3 and S10.

Binds 16S rRNA, required for the assembly of 30S particles and may also be responsible for determining the conformation of the 16S rRNA at the A site. The polypeptide is Small ribosomal subunit protein uS14 (Azorhizobium caulinodans (strain ATCC 43989 / DSM 5975 / JCM 20966 / LMG 6465 / NBRC 14845 / NCIMB 13405 / ORS 571)).